The primary structure comprises 304 residues: Ornithine carbamoyltransferase (304 aa).

Residues 53–56, Gln80, Arg104, and 131–134 each bind carbamoyl phosphate; these read STRT and HPCQ. L-ornithine contacts are provided by residues Asn162, Asp219, and 223 to 224; that span reads SM. Carbamoyl phosphate contacts are provided by residues 259–260 and Arg287; that span reads CL.

The protein belongs to the aspartate/ornithine carbamoyltransferase superfamily. OTCase family.

The protein localises to the cytoplasm. The enzyme catalyses carbamoyl phosphate + L-ornithine = L-citrulline + phosphate + H(+). It participates in amino-acid biosynthesis; L-arginine biosynthesis; L-arginine from L-ornithine and carbamoyl phosphate: step 1/3. Functionally, reversibly catalyzes the transfer of the carbamoyl group from carbamoyl phosphate (CP) to the N(epsilon) atom of ornithine (ORN) to produce L-citrulline. The sequence is that of Ornithine carbamoyltransferase from Herminiimonas arsenicoxydans.